The sequence spans 293 residues: Elongation factor Ts (293 aa).

The tract at residues 79-82 (TDFV) is involved in Mg(2+) ion dislocation from EF-Tu. S149 is subject to Phosphoserine.

This sequence belongs to the EF-Ts family.

The protein resides in the cytoplasm. Associates with the EF-Tu.GDP complex and induces the exchange of GDP to GTP. It remains bound to the aminoacyl-tRNA.EF-Tu.GTP complex up to the GTP hydrolysis stage on the ribosome. The protein is Elongation factor Ts (tsf) of Bacillus subtilis (strain 168).